A 428-amino-acid chain; its full sequence is 3-phosphoshikimate 1-carboxyvinyltransferase (428 aa).

Residues lysine 22, serine 23, and arginine 27 each coordinate 3-phosphoshikimate. Residue lysine 22 participates in phosphoenolpyruvate binding. Residues glycine 94 and arginine 122 each contribute to the phosphoenolpyruvate site. 4 residues coordinate 3-phosphoshikimate: serine 167, glutamine 169, aspartate 314, and lysine 341. Glutamine 169 lines the phosphoenolpyruvate pocket. The active-site Proton acceptor is the aspartate 314. Positions 345 and 387 each coordinate phosphoenolpyruvate.

The protein belongs to the EPSP synthase family. Monomer.

The protein resides in the cytoplasm. It carries out the reaction 3-phosphoshikimate + phosphoenolpyruvate = 5-O-(1-carboxyvinyl)-3-phosphoshikimate + phosphate. The protein operates within metabolic intermediate biosynthesis; chorismate biosynthesis; chorismate from D-erythrose 4-phosphate and phosphoenolpyruvate: step 6/7. Catalyzes the transfer of the enolpyruvyl moiety of phosphoenolpyruvate (PEP) to the 5-hydroxyl of shikimate-3-phosphate (S3P) to produce enolpyruvyl shikimate-3-phosphate and inorganic phosphate. This chain is 3-phosphoshikimate 1-carboxyvinyltransferase, found in Geotalea uraniireducens (strain Rf4) (Geobacter uraniireducens).